Reading from the N-terminus, the 192-residue chain is dTTP/UTP pyrophosphatase (192 aa).

Aspartate 75 functions as the Proton acceptor in the catalytic mechanism.

Belongs to the Maf family. YhdE subfamily. The cofactor is a divalent metal cation.

The protein resides in the cytoplasm. The enzyme catalyses dTTP + H2O = dTMP + diphosphate + H(+). The catalysed reaction is UTP + H2O = UMP + diphosphate + H(+). In terms of biological role, nucleoside triphosphate pyrophosphatase that hydrolyzes dTTP and UTP. May have a dual role in cell division arrest and in preventing the incorporation of modified nucleotides into cellular nucleic acids. This chain is dTTP/UTP pyrophosphatase, found in Bdellovibrio bacteriovorus (strain ATCC 15356 / DSM 50701 / NCIMB 9529 / HD100).